The sequence spans 288 residues: 4-diphosphocytidyl-2-C-methyl-D-erythritol kinase (288 aa).

The active site involves Lys8. 90–100 contacts ATP; the sequence is PVGAGLAGGSS. Asp132 is a catalytic residue.

It belongs to the GHMP kinase family. IspE subfamily.

It carries out the reaction 4-CDP-2-C-methyl-D-erythritol + ATP = 4-CDP-2-C-methyl-D-erythritol 2-phosphate + ADP + H(+). Its pathway is isoprenoid biosynthesis; isopentenyl diphosphate biosynthesis via DXP pathway; isopentenyl diphosphate from 1-deoxy-D-xylulose 5-phosphate: step 3/6. Its function is as follows. Catalyzes the phosphorylation of the position 2 hydroxy group of 4-diphosphocytidyl-2C-methyl-D-erythritol. The polypeptide is 4-diphosphocytidyl-2-C-methyl-D-erythritol kinase (Chlamydia trachomatis serovar L2b (strain UCH-1/proctitis)).